The chain runs to 501 residues: Probable cytochrome P450 6a20 (501 aa).

Heme is bound at residue Cys-445.

The protein belongs to the cytochrome P450 family. Heme serves as cofactor.

It localises to the endoplasmic reticulum membrane. The protein resides in the microsome membrane. In terms of biological role, may be involved in the metabolism of insect hormones and in the breakdown of synthetic insecticides. This is Probable cytochrome P450 6a20 (Cyp6a20) from Drosophila melanogaster (Fruit fly).